A 239-amino-acid chain; its full sequence is Small ribosomal subunit protein uS3c (239 aa).

The KH type-2 domain occupies 43 to 139 (IKNYIQKNRK…RLNISIEKVK (97 aa)). Residues 50-80 (NRKKSSNRKLESDSSSEVITHNRKNDSGSSS) form a disordered region.

Belongs to the universal ribosomal protein uS3 family. As to quaternary structure, part of the 30S ribosomal subunit.

The protein localises to the plastid. It localises to the chloroplast. This is Small ribosomal subunit protein uS3c (rps3) from Lolium perenne (Perennial ryegrass).